We begin with the raw amino-acid sequence, 428 residues long: Serine--tRNA ligase (428 aa).

231–233 (TAE) contributes to the L-serine binding site. Residue 262-264 (RAE) coordinates ATP. Glu285 is an L-serine binding site. 349 to 352 (EISS) contributes to the ATP binding site. Ser385 is a binding site for L-serine.

It belongs to the class-II aminoacyl-tRNA synthetase family. Type-1 seryl-tRNA synthetase subfamily. In terms of assembly, homodimer. The tRNA molecule binds across the dimer.

The protein resides in the cytoplasm. It catalyses the reaction tRNA(Ser) + L-serine + ATP = L-seryl-tRNA(Ser) + AMP + diphosphate + H(+). The catalysed reaction is tRNA(Sec) + L-serine + ATP = L-seryl-tRNA(Sec) + AMP + diphosphate + H(+). It participates in aminoacyl-tRNA biosynthesis; selenocysteinyl-tRNA(Sec) biosynthesis; L-seryl-tRNA(Sec) from L-serine and tRNA(Sec): step 1/1. Catalyzes the attachment of serine to tRNA(Ser). Is also able to aminoacylate tRNA(Sec) with serine, to form the misacylated tRNA L-seryl-tRNA(Sec), which will be further converted into selenocysteinyl-tRNA(Sec). In Methylorubrum extorquens (strain CM4 / NCIMB 13688) (Methylobacterium extorquens), this protein is Serine--tRNA ligase.